A 1111-amino-acid polypeptide reads, in one-letter code: Cellulose synthase-like protein D4 (1111 aa).

2 disordered regions span residues 1-26 (MAST…KFAR) and 175-202 (DYSS…MMKR). The span at 192-202 (GNNNNMSMMKR) shows a compositional bias: polar residues. The next 2 helical transmembrane spans lie at 266–286 (AIIS…CFFL) and 297–317 (AIWL…SWIL). Active-site residues include D397 and D809. 6 consecutive transmembrane segments (helical) span residues 891 to 911 (LFLI…QFIV), 914 to 934 (LSIS…GLAV), 963 to 983 (LYAV…SFTL), 1007 to 1027 (LMIP…VAFI), 1040 to 1060 (LIGG…FAKG), and 1070 to 1090 (TIVF…WTAI).

This sequence belongs to the glycosyltransferase 2 family. Plant cellulose synthase-like D subfamily.

Its subcellular location is the golgi apparatus membrane. Its function is as follows. Thought to be a Golgi-localized beta-glycan synthase that polymerize the backbones of noncellulosic polysaccharides (hemicelluloses) of plant cell wall. In Arabidopsis thaliana (Mouse-ear cress), this protein is Cellulose synthase-like protein D4 (CSLD4).